We begin with the raw amino-acid sequence, 207 residues long: Superoxide dismutase [Mn] (207 aa).

Mn(2+)-binding residues include His-28, His-76, Asp-160, and His-164.

It belongs to the iron/manganese superoxide dismutase family. Mn(2+) is required as a cofactor.

It localises to the secreted. The enzyme catalyses 2 superoxide + 2 H(+) = H2O2 + O2. Destroys superoxide anion radicals which are normally produced within the cells and which are toxic to biological systems. The polypeptide is Superoxide dismutase [Mn] (sodA) (Mycolicibacterium paratuberculosis (strain ATCC BAA-968 / K-10) (Mycobacterium paratuberculosis)).